Here is an 876-residue protein sequence, read N- to C-terminus: MQEHYQPAAIEPAAQKKWDDARISNVSEDASKPKYYCLSMFPYPSGKLHMGHVRNYTIGDVLSRFKLLNGFNVMQPMGWDAFGMPAENAAMKNNVAPAAWTYDNIEYMKTQLKSLGFAVDWEREVATCKPEYYRWEQWLFTKLFEKGIVYRKNGTVNWDPVDQTVLANEQVIDGRGWRSGALIEKREIPMYYFKITDYAEELLNDLDKLEHWPEQVKTMQRNWIGKSRGMTVRFAVSDDSKQGLEGDYAKFLQVYTTRPDTLMGATYVAVAAEHPLATAAAADKPELQAFIAECKAGSVAEADMATMEKKGVPTGRYVVNPLNGDKLEVWIANYVLWGYGDGAVMAVPAHDERDFEFAAKYNLPKKQVIAVGDNAFDANRWQEWYGDKENGVLVNSGDLDGLDFQTAFDAVAAKLQSQGAGEPKTQYRLRDWGISRQRYWGCPIPIVHCEKCGDVPVPADQLPVVLPENVVPDGMGSPLAKMPEFYETSCPCCGGAAKRETDTMDTFMESSWYFFRYMSPKFSDGMVSAESAKYWGAVDQYIGGIEHAILHLLYARFFTKLMRDEGLVNVDEPFERLLTQGMVVCETYYRENDKGGKDWINPADVELTFDDKGRPVSAVLKADGLPVVISGTEKMSKSKNNGVDPQELINAYGADTARLFMMFAAPPEQSLEWSDSGVEGAHRFLRRLWRTVYEYLKQGGAVKAFAGNQDGLSKELKDLRHKLHSTTAKVSDDYGRRQQFNTAIAAVMELLNQYDKTDTGSEQGRAVAQEVLEAAVRLLWPIVPHICETLWSELNGAKLWEAGWPTVDEAALVKSEIEVMVQVNGKLRGKITVAADASKADLEAAALANEGAVKFMEGKPAKKIIVVPGRLVNIVV.

The short motif at 42-52 (PYPSGKLHMGH) is the 'HIGH' region element. The 'KMSKS' region signature appears at 634 to 638 (KMSKS). Lys-637 contacts ATP.

The protein belongs to the class-I aminoacyl-tRNA synthetase family.

It is found in the cytoplasm. The enzyme catalyses tRNA(Leu) + L-leucine + ATP = L-leucyl-tRNA(Leu) + AMP + diphosphate. This is Leucine--tRNA ligase from Neisseria gonorrhoeae (strain NCCP11945).